We begin with the raw amino-acid sequence, 230 residues long: MAKDTPNGAATRGRFITFEGGEGAGKSTQIKLLAERLNAGRIRCVLTREPGGSPGAEIIRHMILSGIGSLIGGTEAETLLFAAARDDHVHTVIEPALAQGSWVLCDRFTDSTRAYQGQMGAVAPALLNAMQRVTIGDLKPDLTIILDVPVEIGVKRARLRRGAAEPDRFEAESLEFHRKLREAYRQIAADEPQRCVLIDANAKVKPVAAKVWAAVQKRLLYSKVSAVQHA.

20-27 (GGEGAGKS) is an ATP binding site.

Belongs to the thymidylate kinase family.

It catalyses the reaction dTMP + ATP = dTDP + ADP. Phosphorylation of dTMP to form dTDP in both de novo and salvage pathways of dTTP synthesis. The chain is Thymidylate kinase from Rhodopseudomonas palustris (strain BisB18).